Reading from the N-terminus, the 908-residue chain is SKI/DACH domain-containing protein 1 (908 aa).

Residues 337–353 show a composition bias toward basic residues; it reads HHHHHHHHHHHHHHHRA. Residues 337-461 form a disordered region; sequence HHHHHHHHHH…SSSGSSQVSV (125 aa). 2 stretches are compositionally biased toward low complexity: residues 370–389 and 396–410; these read PHLG…SSYS and SDFG…NSVS. Positions 411 to 429 are enriched in acidic residues; the sequence is SEEEEEEGEEEEEEEEEEG. The segment covering 449–461 has biased composition (low complexity); sequence ESDSSSGSSQVSV. A Glycyl lysine isopeptide (Lys-Gly) (interchain with G-Cter in SUMO2) cross-link involves residue Lys688. Disordered stretches follow at residues 744–763 and 792–818; these read ETPS…TLGS and LQTP…TNEG. Over residues 746 to 761 the composition is skewed to polar residues; the sequence is PSLNPLAQSQGLSCTL.

The protein belongs to the DACH/dachshund family.

The protein is SKI/DACH domain-containing protein 1 (SKIDA1) of Homo sapiens (Human).